A 106-amino-acid polypeptide reads, in one-letter code: MEGKGFRHTVKAKTVVLYGKLECNVRGLVYELGWRDSMLHSSAIPHKVRNVGKEKAIYLTVCSPPGGVMGSEPLSYFQLQESGCGLVERFKGFKPSDVCDLETLDR.

This is an uncharacterized protein from Archaeoglobus fulgidus (strain ATCC 49558 / DSM 4304 / JCM 9628 / NBRC 100126 / VC-16).